An 833-amino-acid chain; its full sequence is pre-rRNA 2'-O-ribose RNA methyltransferase (833 aa).

Positions 57, 59, 77, 93, and 118 each coordinate S-adenosyl-L-methionine. K158 acts as the Proton acceptor in catalysis. Disordered regions lie at residues K323–N349, K363–L453, L475–D640, L730–D767, and I779–K833. Positions E336–T386 form a coiled coil. Residues K363–R381 show a composition bias toward basic residues. A compositionally biased stretch (basic and acidic residues) spans K382 to E396. A compositionally biased stretch (acidic residues) spans S423 to N441. Residues Q455–I485 are a coiled coil. A compositionally biased stretch (basic and acidic residues) spans L475 to G486. 2 stretches are compositionally biased toward acidic residues: residues Y490–E503 and S542–D556. Residues E557–K566 show a composition bias toward basic and acidic residues. Acidic residues-rich tracts occupy residues D605 to D614 and P626 to D640. Basic and acidic residues-rich tracts occupy residues K732–A741, S751–D767, and K794–A806.

Belongs to the class I-like SAM-binding methyltransferase superfamily. RNA methyltransferase RlmE family. SPB1 subfamily.

The protein resides in the nucleus. Its subcellular location is the nucleolus. The catalysed reaction is a ribonucleotide in rRNA + S-adenosyl-L-methionine = a 2'-O-methylribonucleotide in rRNA + S-adenosyl-L-homocysteine + H(+). Functionally, RNA 2'-O-methyltransferase involved in the maturation of rRNA and in the biogenesis of ribosomal subunits. This chain is pre-rRNA 2'-O-ribose RNA methyltransferase (fsjC), found in Dictyostelium discoideum (Social amoeba).